The sequence spans 782 residues: Endonuclease MutS2 (782 aa).

Position 336–343 (336–343 (GPNTGGKT)) interacts with ATP. Positions 707–782 (LDLRGYRYED…GFGVTVATLK (76 aa)) constitute a Smr domain.

This sequence belongs to the DNA mismatch repair MutS family. MutS2 subfamily. As to quaternary structure, homodimer. Binds to stalled ribosomes, contacting rRNA.

Its function is as follows. Endonuclease that is involved in the suppression of homologous recombination and thus may have a key role in the control of bacterial genetic diversity. Acts as a ribosome collision sensor, splitting the ribosome into its 2 subunits. Detects stalled/collided 70S ribosomes which it binds and splits by an ATP-hydrolysis driven conformational change. Acts upstream of the ribosome quality control system (RQC), a ribosome-associated complex that mediates the extraction of incompletely synthesized nascent chains from stalled ribosomes and their subsequent degradation. Probably generates substrates for RQC. The sequence is that of Endonuclease MutS2 from Staphylococcus aureus (strain MRSA252).